We begin with the raw amino-acid sequence, 176 residues long: dCTP deaminase (176 aa).

Residues 99-104 and Asp-115 contribute to the dCTP site; that span reads RSTLAR. Glu-125 serves as the catalytic Proton donor/acceptor. Gln-163 contacts dCTP.

The protein belongs to the dCTP deaminase family. Homotrimer.

It carries out the reaction dCTP + H2O + H(+) = dUTP + NH4(+). Its pathway is pyrimidine metabolism; dUMP biosynthesis; dUMP from dCTP (dUTP route): step 1/2. Its function is as follows. Catalyzes the deamination of dCTP to dUTP. The sequence is that of dCTP deaminase from Pyrobaculum islandicum (strain DSM 4184 / JCM 9189 / GEO3).